The sequence spans 230 residues: Urease accessory protein UreF (230 aa).

The protein belongs to the UreF family. In terms of assembly, ureD, UreF and UreG form a complex that acts as a GTP-hydrolysis-dependent molecular chaperone, activating the urease apoprotein by helping to assemble the nickel containing metallocenter of UreC. The UreE protein probably delivers the nickel.

It localises to the cytoplasm. In terms of biological role, required for maturation of urease via the functional incorporation of the urease nickel metallocenter. The polypeptide is Urease accessory protein UreF (Cupriavidus metallidurans (strain ATCC 43123 / DSM 2839 / NBRC 102507 / CH34) (Ralstonia metallidurans)).